The following is a 346-amino-acid chain: Nitrilase 3 (346 aa).

The residue at position 2 (Ser-2) is an N-acetylserine. The CN hydrolase domain occupies 25 to 297 (VRVTIVQSST…EGLVTADLDL (273 aa)). Glu-65 serves as the catalytic Proton acceptor. Lys-152 (proton donor) is an active-site residue. The Nucleophile role is filled by Cys-186.

This sequence belongs to the carbon-nitrogen hydrolase superfamily. Nitrilase family.

The protein resides in the cell membrane. The catalysed reaction is a nitrile + 2 H2O = a carboxylate + NH4(+). Functionally, can convert indole-3-acetonitrile to the plant hormone indole-3-acetic acid. This is Nitrilase 3 (NIT3) from Arabidopsis thaliana (Mouse-ear cress).